Here is a 219-residue protein sequence, read N- to C-terminus: MSIQVFCDFDGTITNNDNIMSIMEKFAPPEAEEVKNRILSQELSIQEGVSQLFQFIPTNLHDEIIQFLIETAEIRNGFHEFIQFVNKNNISFYVISGGMDFFVYPLLQGLIPKEQIYCNETDFSNEYITVNWPHPCDHHCQNHCGLCKSSLIRKLSNTNDFHIVIGDSITDLQAAKQADKVFARDFLITKCEENHISYTPFESFHDIQNELKHLLEVKL.

It belongs to the HAD-like hydrolase superfamily. MtnX family.

It catalyses the reaction 2-hydroxy-5-methylsulfanyl-3-oxopent-1-enyl phosphate + H2O = 1,2-dihydroxy-5-(methylsulfanyl)pent-1-en-3-one + phosphate. The protein operates within amino-acid biosynthesis; L-methionine biosynthesis via salvage pathway; L-methionine from S-methyl-5-thio-alpha-D-ribose 1-phosphate: step 4/6. In terms of biological role, dephosphorylates 2-hydroxy-3-keto-5-methylthiopentenyl-1-phosphate (HK-MTPenyl-1-P) yielding 1,2-dihydroxy-3-keto-5-methylthiopentene (DHK-MTPene). The polypeptide is 2-hydroxy-3-keto-5-methylthiopentenyl-1-phosphate phosphatase (Bacillus cereus (strain ATCC 10987 / NRS 248)).